The sequence spans 104 residues: Integration host factor subunit beta (104 aa).

This sequence belongs to the bacterial histone-like protein family. Heterodimer of an alpha and a beta chain.

Its function is as follows. This protein is one of the two subunits of integration host factor, a specific DNA-binding protein that functions in genetic recombination as well as in transcriptional and translational control. In Xylella fastidiosa (strain 9a5c), this protein is Integration host factor subunit beta (ihfB).